Consider the following 931-residue polypeptide: GPI ethanolamine phosphate transferase 1 (931 aa).

Residue Met1 is a topological domain, cytoplasmic. Residues 2 to 22 (LLFFALGLLIHFVFFASIFDI) traverse the membrane as a helical segment. Residues 23-442 (YFTSPLVHGM…SYYHTYDRLF (420 aa)) lie on the Lumenal side of the membrane. 4 N-linked (GlcNAc...) asparagine glycosylation sites follow: Asn128, Asn192, Asn295, and Asn350. The chain crosses the membrane as a helical span at residues 443-463 (LGINVAVGFVGWMSYTSLLII). At 464 to 480 (KSHSNIPKGTRKEGKKP) the chain is on the cytoplasmic side. The chain crosses the membrane as a helical span at residues 481 to 501 (HCLLLYSFIATGVLVACFLMI). Position 502 (Gln502) is a topological domain, lumenal. The helical transmembrane segment at 503 to 523 (ACPWTYYVYCLLPVPIWYAVL) threads the bilayer. At 524 to 543 (REHEVIQDLVESLLTFPRSH) the chain is on the cytoplasmic side. A helical transmembrane segment spans residues 544–564 (FVAYLLVFTLGIEVLVLSFFY). Arg565 is a topological domain (lumenal). A helical membrane pass occupies residues 566 to 586 (YMLTAGLIVFAGWPFLTQLWT). At 587–591 (RAKIT) the chain is on the cytoplasmic side. Residues 592 to 612 (FLSWAFFSLLLAVFPLMPVVG) form a helical membrane-spanning segment. The Lumenal portion of the chain corresponds to 613-618 (RKPNLS). An N-linked (GlcNAc...) asparagine glycan is attached at Asn616. A helical transmembrane segment spans residues 619–639 (LVMGAGFLVLLLSLAVVTTLG). Residues 640–649 (KRNIKLVKGE) lie on the Cytoplasmic side of the membrane. Residues 650–670 (LLVLLLQMLSTVLSMYVVYST) form a helical membrane-spanning segment. At 671–685 (HHSLLKKEGLPLMNQ) the chain is on the lumenal side. A helical transmembrane segment spans residues 686–706 (IVSWATLASSLVAPLLSSTAL). Over 707–723 (SQRLASILLSLMSTYLL) the chain is Cytoplasmic. The helical transmembrane segment at 724 to 744 (LSTGYEALFPLVLSCLMFVWI) threads the bilayer. Residues 745–786 (QVEQETLQQPGVSCKQKLTSIQFTCDTDIAQFRQLCPDDIRR) lie on the Lumenal side of the membrane. A helical transmembrane segment spans residues 787–807 (AFFLVFFLLTAFFGTGNIASI). The Cytoplasmic segment spans residues 808 to 824 (NSFDLASVYCFLTVFSP). The chain crosses the membrane as a helical span at residues 825-845 (FMMGALMMWKILIPFVLVMCA). Topologically, residues 846 to 858 (FEAVQITTQLSSK) are lumenal. The chain crosses the membrane as a helical span at residues 859 to 879 (GLFLVVLIISDIMALHFFFLV). The Cytoplasmic segment spans residues 880–894 (KDSGSWLDIGTSISH). A helical transmembrane segment spans residues 895-915 (YVIVMSMTIFLVFLNGLAQLL). Over 916–931 (TTKKLQLCGKPKSHLM) the chain is Lumenal.

The protein belongs to the PIGG/PIGN/PIGO family. PIGN subfamily.

The protein resides in the endoplasmic reticulum membrane. Its pathway is glycolipid biosynthesis; glycosylphosphatidylinositol-anchor biosynthesis. Functionally, ethanolamine phosphate transferase that catalyzes an ethanolamine phosphate (EtNP) transfer from phosphatidylethanolamine (PE) to the 2-OH position of the first alpha-1,4-linked mannose of the alpha-D-Man-(1-&gt;6)-alpha-D-Man-(1-&gt;4)-alpha-D-GlcN-(1-&gt;6)-(1-radyl,2-acyl-sn-glycero-3-phospho)-2-acyl-inositol (also termed H3) intermediate to generate an alpha-D-Man-(1-&gt;6)-2-PEtn-alpha-D-Man-(1-&gt;4)-alpha-D-GlcN-(1-&gt;6)-(1-radyl,2-acyl-sn-glycero-3-phospho)-2-acyl-inositol and participates in the eighth step of the glycosylphosphatidylinositol-anchor biosynthesis. May act as suppressor of replication stress and chromosome missegregation. In Mus musculus (Mouse), this protein is GPI ethanolamine phosphate transferase 1.